Consider the following 225-residue polypeptide: Thymidylate kinase (225 aa).

15-22 (GGEGSGKS) contributes to the ATP binding site.

It belongs to the thymidylate kinase family.

The catalysed reaction is dTMP + ATP = dTDP + ADP. Its function is as follows. Phosphorylation of dTMP to form dTDP in both de novo and salvage pathways of dTTP synthesis. The protein is Thymidylate kinase of Protochlamydia amoebophila (strain UWE25).